A 222-amino-acid polypeptide reads, in one-letter code: Orotidine 5'-phosphate decarboxylase (222 aa).

Substrate contacts are provided by residues aspartate 11, lysine 30, 59–68 (DFKLADIGYI), serine 115, 164–174 (PGMGSQGGSYG), glycine 187, and arginine 188. Lysine 61 acts as the Proton donor in catalysis.

This sequence belongs to the OMP decarboxylase family. Type 1 subfamily. In terms of assembly, homodimer.

The enzyme catalyses orotidine 5'-phosphate + H(+) = UMP + CO2. It functions in the pathway pyrimidine metabolism; UMP biosynthesis via de novo pathway; UMP from orotate: step 2/2. In terms of biological role, catalyzes the decarboxylation of orotidine 5'-monophosphate (OMP) to uridine 5'-monophosphate (UMP). The chain is Orotidine 5'-phosphate decarboxylase from Saccharolobus solfataricus (strain ATCC 35092 / DSM 1617 / JCM 11322 / P2) (Sulfolobus solfataricus).